We begin with the raw amino-acid sequence, 346 residues long: Tryptophan--tRNA ligase (346 aa).

Residues 21–23 (QPT) and 30–31 (GN) contribute to the ATP site. A 'HIGH' region motif is present at residues 22 to 31 (PTADSYHLGN). Asp147 contacts L-tryptophan. ATP is bound by residues 159–161 (GED), Ile198, and 207–211 (KMSKS). The 'KMSKS' region signature appears at 207-211 (KMSKS).

The protein belongs to the class-I aminoacyl-tRNA synthetase family. In terms of assembly, homodimer.

It is found in the cytoplasm. The enzyme catalyses tRNA(Trp) + L-tryptophan + ATP = L-tryptophyl-tRNA(Trp) + AMP + diphosphate + H(+). Catalyzes the attachment of tryptophan to tRNA(Trp). The chain is Tryptophan--tRNA ligase from Corynebacterium efficiens (strain DSM 44549 / YS-314 / AJ 12310 / JCM 11189 / NBRC 100395).